The chain runs to 695 residues: tRNA wybutosine-synthesizing protein 4 (695 aa).

S-adenosyl-L-methionine-binding positions include Lys-38, Arg-88, Gly-115, 146-147 (DY), 196-197 (DL), and Glu-224. The active-site Proton donor; for both methylation and methoxycarbonylation activities is Arg-88. Residue Tyr-229 is the Proton acceptor; for methoxycarbonylation activity of the active site.

Belongs to the methyltransferase superfamily. LCMT family.

The protein resides in the cytoplasm. The protein localises to the mitochondrion. The enzyme catalyses 7-[(3S)-3-amino-3-carboxypropyl]wyosine(37) in tRNA(Phe) + S-adenosyl-L-methionine = 7-[(3S)-(3-amino-3-methoxycarbonyl)propyl]wyosine(37) in tRNA(Phe) + S-adenosyl-L-homocysteine. It catalyses the reaction 7-[(3S)-(3-amino-3-methoxycarbonyl)propyl]wyosine(37) in tRNA(Phe) + S-adenosyl-L-methionine + CO2 = wybutosine(37) in tRNA(Phe) + S-adenosyl-L-homocysteine + 2 H(+). The protein operates within tRNA modification; wybutosine-tRNA(Phe) biosynthesis. Its function is as follows. S-adenosyl-L-methionine-dependent methyltransferase that acts as a component of the wybutosine biosynthesis pathway. Wybutosine is a hyper modified guanosine with a tricyclic base found at the 3'-position adjacent to the anticodon of eukaryotic phenylalanine tRNA. Catalyzes the final 2 independent reactions, methylation of the alpha-carboxy group of wybutosine-72 to form wybutosine-58, and methoxycarbonylation of alpha-amino group of wybutosine-58 through the fixation of CO(2) to complete wybutosine. The chain is tRNA wybutosine-synthesizing protein 4 (PPM2) from Saccharomyces cerevisiae (strain ATCC 204508 / S288c) (Baker's yeast).